A 159-amino-acid chain; its full sequence is ATP synthase subunit b (159 aa).

A helical membrane pass occupies residues 7–27 (DFIWTLINFFVLLFILKILLY).

The protein belongs to the ATPase B chain family. F-type ATPases have 2 components, F(1) - the catalytic core - and F(0) - the membrane proton channel. F(1) has five subunits: alpha(3), beta(3), gamma(1), delta(1), epsilon(1). F(0) has three main subunits: a(1), b(2) and c(10-14). The alpha and beta chains form an alternating ring which encloses part of the gamma chain. F(1) is attached to F(0) by a central stalk formed by the gamma and epsilon chains, while a peripheral stalk is formed by the delta and b chains.

It is found in the cell membrane. Functionally, f(1)F(0) ATP synthase produces ATP from ADP in the presence of a proton or sodium gradient. F-type ATPases consist of two structural domains, F(1) containing the extramembraneous catalytic core and F(0) containing the membrane proton channel, linked together by a central stalk and a peripheral stalk. During catalysis, ATP synthesis in the catalytic domain of F(1) is coupled via a rotary mechanism of the central stalk subunits to proton translocation. Component of the F(0) channel, it forms part of the peripheral stalk, linking F(1) to F(0). The polypeptide is ATP synthase subunit b (Carboxydothermus hydrogenoformans (strain ATCC BAA-161 / DSM 6008 / Z-2901)).